The primary structure comprises 440 residues: uncharacterized protein (440 aa).

12 helical membrane passes run 24–44 (VVIGLGSMIGAGIFAALAPAA), 47–67 (AGSGLLLGLAVAAVVAYCNAI), 93–113 (FWGYLAGWGFVVGKTASCAAM), 117–137 (VGFYVWPAQAHAVAVAVVVAL), 155–175 (IVAVVLVVLTAVVVAAYGSGA), 183–203 (IGVDAHVWGMLQAAGLLFFAF), 229–249 (LALGITLAVYALVAVAVIAVL), 276–296 (VVQIGAAVAALGSLLALILGV), 323–343 (PFRAELVVGAVVAALAATADI), 346–366 (AIGFSSFGVLVYYAIANASAL), 379–399 (IPLVGLIGCVVLAFALPLSSV), and 400–420 (AAGAAVLGVGVAAYGVRRIIT).

It belongs to the amino acid-polyamine-organocation (APC) superfamily.

Its subcellular location is the cell membrane. Probable amino-acid or metabolite transport protein. This is an uncharacterized protein from Mycobacterium bovis (strain ATCC BAA-935 / AF2122/97).